Reading from the N-terminus, the 323-residue chain is Prenyl transferase (323 aa).

The isopentenyl diphosphate site is built by Lys-46, Arg-49, and His-81. Residues Asp-88 and Asp-92 each coordinate Mg(2+). Arg-97 is a binding site for an all-trans-polyprenyl diphosphate. Arg-98 serves as a coordination point for isopentenyl diphosphate. Residues Lys-174, Thr-175, and Gln-212 each contribute to the an all-trans-polyprenyl diphosphate site.

The protein belongs to the FPP/GGPP synthase family. It depends on Mg(2+) as a cofactor.

Its function is as follows. Possible role in synthesis of the nonaprenyl side chain of plastoquinone or in synthesis of other prenyl chains such as undekaprenyl pyrophosphate. The chain is Prenyl transferase (preA) from Synechocystis sp. (strain ATCC 27184 / PCC 6803 / Kazusa).